A 408-amino-acid polypeptide reads, in one-letter code: tRNA-specific 2-thiouridylase MnmA (408 aa).

ATP contacts are provided by residues 38 to 45 (GMSGGVDS) and Met64. An interaction with target base in tRNA region spans residues 124–126 (NPD). Residue Cys129 is the Nucleophile of the active site. An intrachain disulfide couples Cys129 to Cys231. Gly153 provides a ligand contact to ATP. The interval 181 to 183 (KDQ) is interaction with tRNA. Cys231 (cysteine persulfide intermediate) is an active-site residue. Residues 348–349 (RY) form an interaction with tRNA region.

Belongs to the MnmA/TRMU family.

It is found in the cytoplasm. It catalyses the reaction S-sulfanyl-L-cysteinyl-[protein] + uridine(34) in tRNA + AH2 + ATP = 2-thiouridine(34) in tRNA + L-cysteinyl-[protein] + A + AMP + diphosphate + H(+). Catalyzes the 2-thiolation of uridine at the wobble position (U34) of tRNA, leading to the formation of s(2)U34. This chain is tRNA-specific 2-thiouridylase MnmA, found in Psychrobacter cryohalolentis (strain ATCC BAA-1226 / DSM 17306 / VKM B-2378 / K5).